A 236-amino-acid chain; its full sequence is Alanyl-tRNA editing protein AlaX-M (236 aa).

3 residues coordinate Zn(2+): histidine 101, histidine 105, and histidine 205.

It belongs to the class-II aminoacyl-tRNA synthetase family. Editing domain AlaX-M subfamily. Requires Zn(2+) as cofactor.

Its subcellular location is the cytoplasm. In terms of biological role, functions in trans to edit the amino acid moiety from incorrectly charged Ser-tRNA(Ala). This chain is Alanyl-tRNA editing protein AlaX-M (alaXM), found in Saccharolobus solfataricus (strain ATCC 35092 / DSM 1617 / JCM 11322 / P2) (Sulfolobus solfataricus).